The sequence spans 505 residues: Maturase K (505 aa).

The protein belongs to the intron maturase 2 family. MatK subfamily.

The protein localises to the plastid. It is found in the chloroplast. Functionally, usually encoded in the trnK tRNA gene intron. Probably assists in splicing its own and other chloroplast group II introns. The protein is Maturase K of Illicium oligandrum (Star anise).